We begin with the raw amino-acid sequence, 156 residues long: 3-hydroxyacyl-[acyl-carrier-protein] dehydratase FabZ (156 aa).

Residue His-57 is part of the active site.

It belongs to the thioester dehydratase family. FabZ subfamily.

It localises to the cytoplasm. The catalysed reaction is a (3R)-hydroxyacyl-[ACP] = a (2E)-enoyl-[ACP] + H2O. Functionally, involved in unsaturated fatty acids biosynthesis. Catalyzes the dehydration of short chain beta-hydroxyacyl-ACPs and long chain saturated and unsaturated beta-hydroxyacyl-ACPs. The polypeptide is 3-hydroxyacyl-[acyl-carrier-protein] dehydratase FabZ (Anaeromyxobacter dehalogenans (strain 2CP-C)).